The primary structure comprises 365 residues: Probable dual-specificity RNA methyltransferase RlmN (365 aa).

Glutamate 108 (proton acceptor) is an active-site residue. Positions 114–352 (YPDRNTVCIS…SCTVRDTRGR (239 aa)) constitute a Radical SAM core domain. Cysteine 121 and cysteine 358 are disulfide-bonded. The [4Fe-4S] cluster site is built by cysteine 128, cysteine 132, and cysteine 135. S-adenosyl-L-methionine is bound by residues 179-180 (GE), serine 213, 236-238 (SLH), and asparagine 315. Cysteine 358 (S-methylcysteine intermediate) is an active-site residue.

It belongs to the radical SAM superfamily. RlmN family. It depends on [4Fe-4S] cluster as a cofactor.

The protein resides in the cytoplasm. It catalyses the reaction adenosine(2503) in 23S rRNA + 2 reduced [2Fe-2S]-[ferredoxin] + 2 S-adenosyl-L-methionine = 2-methyladenosine(2503) in 23S rRNA + 5'-deoxyadenosine + L-methionine + 2 oxidized [2Fe-2S]-[ferredoxin] + S-adenosyl-L-homocysteine. The enzyme catalyses adenosine(37) in tRNA + 2 reduced [2Fe-2S]-[ferredoxin] + 2 S-adenosyl-L-methionine = 2-methyladenosine(37) in tRNA + 5'-deoxyadenosine + L-methionine + 2 oxidized [2Fe-2S]-[ferredoxin] + S-adenosyl-L-homocysteine. Specifically methylates position 2 of adenine 2503 in 23S rRNA and position 2 of adenine 37 in tRNAs. The chain is Probable dual-specificity RNA methyltransferase RlmN from Mycolicibacterium vanbaalenii (strain DSM 7251 / JCM 13017 / BCRC 16820 / KCTC 9966 / NRRL B-24157 / PYR-1) (Mycobacterium vanbaalenii).